The sequence spans 622 residues: Putative DEAD-box ATP-dependent RNA helicase 44 (622 aa).

The segment at 50–97 (DRRSIVQISRSNSDNDDGNRPRDVKRERHRSHDHDRNRESDREFRERE) is disordered. Positions 66 to 97 (DGNRPRDVKRERHRSHDHDRNRESDREFRERE) are enriched in basic and acidic residues. A Helicase ATP-binding domain is found at 241-436 (IPLGLEQRDV…RKFLRNPVVV (196 aa)). 254–261 (SATGSGKT) provides a ligand contact to ATP. A DEAD box motif is present at residues 367–370 (DEAD). Residues 460 to 606 (RLKKLIDDLG…LVPPELARHE (147 aa)) enclose the Helicase C-terminal domain.

This sequence belongs to the DEAD box helicase family. DDX23/PRP28 subfamily.

The catalysed reaction is ATP + H2O = ADP + phosphate + H(+). This chain is Putative DEAD-box ATP-dependent RNA helicase 44 (RH44), found in Arabidopsis thaliana (Mouse-ear cress).